A 381-amino-acid chain; its full sequence is Heme A synthase (381 aa).

The tract at residues 1-28 (MSNRTIFEEVSSDSKQQSSPTPGGIDRK) is disordered. 8 consecutive transmembrane segments (helical) span residues 36–56 (IRVW…VGGL), 125–145 (VIGL…SIPT), 151–171 (LLLP…MVAS), 187–207 (LATH…YMFL), 230–250 (STGL…VAGI), 287–307 (LVQF…VVVW), 320–340 (FAFN…IVTV), and 344–364 (APVE…VLIL). Heme is bound at residue histidine 292. Residue histidine 352 participates in heme binding.

Belongs to the COX15/CtaA family. Type 2 subfamily. In terms of assembly, interacts with CtaB. Heme b serves as cofactor.

The protein localises to the cell membrane. The catalysed reaction is Fe(II)-heme o + 2 A + H2O = Fe(II)-heme a + 2 AH2. The protein operates within porphyrin-containing compound metabolism; heme A biosynthesis; heme A from heme O: step 1/1. Its function is as follows. Catalyzes the conversion of heme O to heme A by two successive hydroxylations of the methyl group at C8. The first hydroxylation forms heme I, the second hydroxylation results in an unstable dihydroxymethyl group, which spontaneously dehydrates, resulting in the formyl group of heme A. In Ruegeria sp. (strain TM1040) (Silicibacter sp.), this protein is Heme A synthase.